A 454-amino-acid polypeptide reads, in one-letter code: MKQNNLNVKEKKFSKVAFSHVGCEKNLVDTQHMQGLLDKDGYEVESNINDANIVVVNTCSFIETAREESIRKILEYTNQGKEVIVAGCMAQHFKEELLKEIPEIKGLVGTGDYQKIAKVLDRVEKGEIVNEVSKIPEFIADEEIPRFVDKNKFVAYLRIAEGCNYNCAFCIIPKLRGPQRSRTIESIVSEAKSLAKQGIKEIILISQITTNYGKDIYGKPSLAKLLNELSKVPIPWIRIHYAYPTGLTDEVIRAFKDSKNIVPYFDLPLQHSHPDVLKSMNRPWQASLNESILEKIREEIPSAVLRTSLIVGFPGEKKEHFEHLLEFLDRHKFDHVGVFIFSPEEGTAAFDLPNKVSPEVAAARKDNVISVQQNISKDKNQSYVGSKMKILVEKISDNNELIGRSYNFAPEIDGNVILSISANNYLRNYIGKFVEANISFADEYDLYGETIKIL.

An MTTase N-terminal domain is found at 14–125 (SKVAFSHVGC…IAKVLDRVEK (112 aa)). C23, C59, C88, C163, C167, and C170 together coordinate [4Fe-4S] cluster. The 230-residue stretch at 149 to 378 (DKNKFVAYLR…ISVQQNISKD (230 aa)) folds into the Radical SAM core domain. Residues 381 to 452 (QSYVGSKMKI…EYDLYGETIK (72 aa)) enclose the TRAM domain.

Belongs to the methylthiotransferase family. RimO subfamily. [4Fe-4S] cluster serves as cofactor.

Its subcellular location is the cytoplasm. It catalyses the reaction L-aspartate(89)-[ribosomal protein uS12]-hydrogen + (sulfur carrier)-SH + AH2 + 2 S-adenosyl-L-methionine = 3-methylsulfanyl-L-aspartate(89)-[ribosomal protein uS12]-hydrogen + (sulfur carrier)-H + 5'-deoxyadenosine + L-methionine + A + S-adenosyl-L-homocysteine + 2 H(+). Its function is as follows. Catalyzes the methylthiolation of an aspartic acid residue of ribosomal protein uS12. This chain is Ribosomal protein uS12 methylthiotransferase RimO, found in Prochlorococcus marinus (strain MIT 9312).